Reading from the N-terminus, the 447-residue chain is Exodeoxyribonuclease 7 large subunit (447 aa).

This sequence belongs to the XseA family. In terms of assembly, heterooligomer composed of large and small subunits.

Its subcellular location is the cytoplasm. It carries out the reaction Exonucleolytic cleavage in either 5'- to 3'- or 3'- to 5'-direction to yield nucleoside 5'-phosphates.. Its function is as follows. Bidirectionally degrades single-stranded DNA into large acid-insoluble oligonucleotides, which are then degraded further into small acid-soluble oligonucleotides. This chain is Exodeoxyribonuclease 7 large subunit, found in Thioalkalivibrio sulfidiphilus (strain HL-EbGR7).